The following is a 404-amino-acid chain: Acetate kinase (404 aa).

Position 9 (Asn9) interacts with Mg(2+). Lys16 provides a ligand contact to ATP. Arg100 serves as a coordination point for substrate. Asp157 functions as the Proton donor/acceptor in the catalytic mechanism. ATP contacts are provided by residues 215 to 219, 290 to 292, and 335 to 339; these read HLGNG, DMR, and GIGEN. Position 386 (Glu386) interacts with Mg(2+).

It belongs to the acetokinase family. Homodimer. Requires Mg(2+) as cofactor. It depends on Mn(2+) as a cofactor.

It localises to the cytoplasm. The catalysed reaction is acetate + ATP = acetyl phosphate + ADP. It participates in metabolic intermediate biosynthesis; acetyl-CoA biosynthesis; acetyl-CoA from acetate: step 1/2. Catalyzes the formation of acetyl phosphate from acetate and ATP. Can also catalyze the reverse reaction. The chain is Acetate kinase from Methylocella silvestris (strain DSM 15510 / CIP 108128 / LMG 27833 / NCIMB 13906 / BL2).